The primary structure comprises 462 residues: Bifunctional protein GlmU (462 aa).

The interval 1–235 (MSYINFSAII…TFEIMGVNSK (235 aa)) is pyrophosphorylase. UDP-N-acetyl-alpha-D-glucosamine contacts are provided by residues 11–14 (LAAG), Lys-25, Gln-80, 85–86 (GT), 107–109 (YGD), Gly-144, Glu-159, and Asn-233. Position 109 (Asp-109) interacts with Mg(2+). Asn-233 contributes to the Mg(2+) binding site. The interval 236-256 (SDFVDLDKQYQQRKVQCLLSS) is linker. The interval 257-462 (GLMIIDPNRF…LNWKRLKNKK (206 aa)) is N-acetyltransferase. The UDP-N-acetyl-alpha-D-glucosamine site is built by Arg-339 and Lys-357. His-369 serves as the catalytic Proton acceptor. UDP-N-acetyl-alpha-D-glucosamine-binding residues include Tyr-372 and Asn-383. Residues Ala-386, 392 to 393 (NY), Ala-429, and Arg-446 contribute to the acetyl-CoA site.

The protein in the N-terminal section; belongs to the N-acetylglucosamine-1-phosphate uridyltransferase family. This sequence in the C-terminal section; belongs to the transferase hexapeptide repeat family. In terms of assembly, homotrimer. The cofactor is Mg(2+).

The protein resides in the cytoplasm. It catalyses the reaction alpha-D-glucosamine 1-phosphate + acetyl-CoA = N-acetyl-alpha-D-glucosamine 1-phosphate + CoA + H(+). It carries out the reaction N-acetyl-alpha-D-glucosamine 1-phosphate + UTP + H(+) = UDP-N-acetyl-alpha-D-glucosamine + diphosphate. It functions in the pathway nucleotide-sugar biosynthesis; UDP-N-acetyl-alpha-D-glucosamine biosynthesis; N-acetyl-alpha-D-glucosamine 1-phosphate from alpha-D-glucosamine 6-phosphate (route II): step 2/2. It participates in nucleotide-sugar biosynthesis; UDP-N-acetyl-alpha-D-glucosamine biosynthesis; UDP-N-acetyl-alpha-D-glucosamine from N-acetyl-alpha-D-glucosamine 1-phosphate: step 1/1. Its pathway is bacterial outer membrane biogenesis; LPS lipid A biosynthesis. Its function is as follows. Catalyzes the last two sequential reactions in the de novo biosynthetic pathway for UDP-N-acetylglucosamine (UDP-GlcNAc). The C-terminal domain catalyzes the transfer of acetyl group from acetyl coenzyme A to glucosamine-1-phosphate (GlcN-1-P) to produce N-acetylglucosamine-1-phosphate (GlcNAc-1-P), which is converted into UDP-GlcNAc by the transfer of uridine 5-monophosphate (from uridine 5-triphosphate), a reaction catalyzed by the N-terminal domain. In Blochmanniella pennsylvanica (strain BPEN), this protein is Bifunctional protein GlmU.